Reading from the N-terminus, the 2477-residue chain is Spectrin alpha chain, non-erythrocytic 1 (2477 aa).

Residues 1 to 14 are N-terminal domain; sequence MDPSGVKVLETAED. Spectrin repeat units follow at residues 45–146, 150–251, 256–358, 361–465, 468–570, 574–676, 679–781, 785–888, 891–969, and 1096–1162; these read RFQF…VKLL, KLVQ…QGKL, EVQR…ARLN, YRLQ…QYEQ, DLQL…AQLA, HLQQ…KLRE, QQQQ…QKLA, RLQQ…DLED, QAQQ…ETGK, and LFRE…SEGL. Residues 967–1026 enclose the SH3 domain; that stretch reads TGKELVLALYDYQEKSPREVTMKKGDILTLLNSTNKDWWKVEVNDRQGFVPAAYVKKLDP. At Tyr-1176 the chain carries Phosphotyrosine. 10 Spectrin repeats span residues 1234–1336, 1339–1442, 1446–1549, 1552–1661, 1664–1767, 1769–1873, 1876–1979, 1983–2086, 2097–2199, and 2211–2315; these read EVQR…EKLG, HDLQ…MMLD, ELQL…KLGE, TLQQ…KLKE, KQQN…KLNE, HRLH…RLEE, EYQQ…KLDE, FLQF…KLLE, LFLT…LELQ, and LRQE…NLEQ. Positions 2257-2477 are C-terminal domain; sequence HQEIRAMRSQ…IEFTRSLFVN (221 aa). EF-hand domains follow at residues 2328-2363, 2371-2406, and 2409-2444; these read EALK…LGYD, EPDP…RETE, and KSSE…EQAD. Residues Asp-2341, Asp-2343, Ser-2345, Arg-2347, Glu-2352, Asp-2384, Asn-2386, Asp-2388, His-2390, and Glu-2395 each contribute to the Ca(2+) site.

This sequence belongs to the spectrin family. In terms of assembly, like erythrocyte spectrin, the spectrin-like proteins are capable of forming dimers which can further associate to tetramers. Interacts with ACP1. Phosphorylation of Tyr-1176 decreases sensitivity to cleavage by calpain in vitro.

The protein resides in the cytoplasm. Its subcellular location is the cytoskeleton. The protein localises to the cell cortex. Its function is as follows. Morphologically, spectrin-like proteins appear to be related to spectrin, showing a flexible rod-like structure. They can bind actin but seem to differ in their calmodulin-binding activity. In nonerythroid tissues, spectrins, in association with some other proteins, may play an important role in membrane organization. The sequence is that of Spectrin alpha chain, non-erythrocytic 1 (SPTAN1) from Gallus gallus (Chicken).